Here is a 248-residue protein sequence, read N- to C-terminus: 14-3-3 protein gamma-2 (248 aa).

This sequence belongs to the 14-3-3 family. As to quaternary structure, homodimer, and heterodimer with other family members. In terms of tissue distribution, expressed in brain, gill, heart, intestine, kidney, liver, ovary, skeletal muscle, spleen and testis.

The protein localises to the cytoplasm. Adapter protein implicated in the regulation of a large spectrum of both general and specialized signaling pathways. Binds to a large number of partners, usually by recognition of a phosphoserine or phosphothreonine motif. Binding generally results in the modulation of the activity of the binding partner. This Oncorhynchus mykiss (Rainbow trout) protein is 14-3-3 protein gamma-2.